Consider the following 279-residue polypeptide: Proteasome subunit beta (279 aa).

Positions 1 to 53 (MAAAFDPSGRLPDLFTSAGTSSFSAFLSMAAPELLPGRRPLPPGTAADLTPHA) are cleaved as a propeptide — removed in mature form; by autocatalysis. Thr-54 serves as the catalytic Nucleophile.

The protein belongs to the peptidase T1B family. The 20S proteasome core is composed of 14 alpha and 14 beta subunits that assemble into four stacked heptameric rings, resulting in a barrel-shaped structure. The two inner rings, each composed of seven catalytic beta subunits, are sandwiched by two outer rings, each composed of seven alpha subunits. The catalytic chamber with the active sites is on the inside of the barrel. Has a gated structure, the ends of the cylinder being occluded by the N-termini of the alpha-subunits. Is capped by the proteasome-associated ATPase, ARC.

The protein localises to the cytoplasm. The catalysed reaction is Cleavage of peptide bonds with very broad specificity.. The protein operates within protein degradation; proteasomal Pup-dependent pathway. With respect to regulation, the formation of the proteasomal ATPase ARC-20S proteasome complex, likely via the docking of the C-termini of ARC into the intersubunit pockets in the alpha-rings, may trigger opening of the gate for substrate entry. Interconversion between the open-gate and close-gate conformations leads to a dynamic regulation of the 20S proteasome proteolysis activity. Its function is as follows. Component of the proteasome core, a large protease complex with broad specificity involved in protein degradation. This is Proteasome subunit beta from Salinispora arenicola (strain CNS-205).